Here is a 93-residue protein sequence, read N- to C-terminus: Small ribosomal subunit protein uS19 (93 aa).

It belongs to the universal ribosomal protein uS19 family.

Functionally, protein S19 forms a complex with S13 that binds strongly to the 16S ribosomal RNA. The chain is Small ribosomal subunit protein uS19 from Nocardia farcinica (strain IFM 10152).